We begin with the raw amino-acid sequence, 549 residues long: Probable protein kinase UbiB (549 aa).

Positions 123–501 (DFNETPLASA…QQQAHKSNYL (379 aa)) constitute a Protein kinase domain. Residues 129 to 137 (LASASISQV) and lysine 152 contribute to the ATP site. Residue aspartate 287 is the Proton acceptor of the active site. 2 consecutive transmembrane segments (helical) span residues 496–516 (HKSN…TLLI) and 520–540 (ATLW…FVGW).

The protein belongs to the ABC1 family. UbiB subfamily.

Its subcellular location is the cell inner membrane. It participates in cofactor biosynthesis; ubiquinone biosynthesis [regulation]. Functionally, is probably a protein kinase regulator of UbiI activity which is involved in aerobic coenzyme Q (ubiquinone) biosynthesis. The protein is Probable protein kinase UbiB of Shewanella baltica (strain OS185).